The sequence spans 442 residues: Ribosomal protein uS12 methylthiotransferase RimO (442 aa).

The MTTase N-terminal domain occupies 8-118 (PKVGFVSLGC…VLGHVHKYVA (111 aa)). [4Fe-4S] cluster is bound by residues Cys17, Cys53, Cys82, Cys150, Cys154, and Cys157. One can recognise a Radical SAM core domain in the interval 136-373 (LTPRHYAYLK…MELQQQVSIR (238 aa)). One can recognise a TRAM domain in the interval 376 to 442 (ARKVGKEMTV…EYDLWASLIG (67 aa)).

This sequence belongs to the methylthiotransferase family. RimO subfamily. [4Fe-4S] cluster is required as a cofactor.

It is found in the cytoplasm. The catalysed reaction is L-aspartate(89)-[ribosomal protein uS12]-hydrogen + (sulfur carrier)-SH + AH2 + 2 S-adenosyl-L-methionine = 3-methylsulfanyl-L-aspartate(89)-[ribosomal protein uS12]-hydrogen + (sulfur carrier)-H + 5'-deoxyadenosine + L-methionine + A + S-adenosyl-L-homocysteine + 2 H(+). In terms of biological role, catalyzes the methylthiolation of an aspartic acid residue of ribosomal protein uS12. The sequence is that of Ribosomal protein uS12 methylthiotransferase RimO from Aeromonas salmonicida (strain A449).